We begin with the raw amino-acid sequence, 257 residues long: Probable enoyl-CoA hydratase echA17 (257 aa).

Belongs to the enoyl-CoA hydratase/isomerase family.

It carries out the reaction a (3S)-3-hydroxyacyl-CoA = a (2E)-enoyl-CoA + H2O. It catalyses the reaction a 4-saturated-(3S)-3-hydroxyacyl-CoA = a (3E)-enoyl-CoA + H2O. Functionally, could possibly oxidize fatty acids using specific components. The polypeptide is Probable enoyl-CoA hydratase echA17 (echA17) (Mycobacterium avium (strain 104)).